Consider the following 433-residue polypeptide: GTPase Obg (433 aa).

The Obg domain occupies 1-159; the sequence is MKFVDSADLI…FEIRAELKVL (159 aa). Residues 160–332 form the OBG-type G domain; the sequence is ADVGFVGLPN…LLFMIYEELK (173 aa). GTP is bound by residues 166-173, 191-195, 213-216, 284-287, and 313-315; these read GLPNAGKS, FTTIT, DLPG, NKMD, and SGL. Mg(2+) contacts are provided by S173 and T193. The region spanning 355 to 433 is the OCT domain; sequence KFEEQKEDIQ…VFDYELEWTD (79 aa).

This sequence belongs to the TRAFAC class OBG-HflX-like GTPase superfamily. OBG GTPase family. Monomer. The cofactor is Mg(2+).

The protein resides in the cytoplasm. Its function is as follows. An essential GTPase which binds GTP, GDP and possibly (p)ppGpp with moderate affinity, with high nucleotide exchange rates and a fairly low GTP hydrolysis rate. Plays a role in control of the cell cycle, stress response, ribosome biogenesis and in those bacteria that undergo differentiation, in morphogenesis control. The chain is GTPase Obg from Mycoplasma mycoides subsp. mycoides SC (strain CCUG 32753 / NCTC 10114 / PG1).